Here is a 314-residue protein sequence, read N- to C-terminus: tRNA-cytidine(32) 2-sulfurtransferase (314 aa).

The PP-loop motif motif lies at 49-54 (SGGKDS). [4Fe-4S] cluster is bound by residues Cys-124, Cys-127, and Cys-215.

This sequence belongs to the TtcA family. In terms of assembly, homodimer. The cofactor is Mg(2+). It depends on [4Fe-4S] cluster as a cofactor.

It localises to the cytoplasm. It carries out the reaction cytidine(32) in tRNA + S-sulfanyl-L-cysteinyl-[cysteine desulfurase] + AH2 + ATP = 2-thiocytidine(32) in tRNA + L-cysteinyl-[cysteine desulfurase] + A + AMP + diphosphate + H(+). The protein operates within tRNA modification. Its function is as follows. Catalyzes the ATP-dependent 2-thiolation of cytidine in position 32 of tRNA, to form 2-thiocytidine (s(2)C32). The sulfur atoms are provided by the cysteine/cysteine desulfurase (IscS) system. This chain is tRNA-cytidine(32) 2-sulfurtransferase, found in Pasteurella multocida (strain Pm70).